Here is a 229-residue protein sequence, read N- to C-terminus: Heptaprenylglyceryl phosphate synthase (229 aa).

K12 provides a ligand contact to sn-glycerol 1-phosphate. D14 and T40 together coordinate Mg(2+). Residues 159 to 164, G189, and 209 to 210 each bind sn-glycerol 1-phosphate; these read YIEYSG and GN.

This sequence belongs to the GGGP/HepGP synthase family. Group I subfamily. Homodimer. Mg(2+) is required as a cofactor.

It catalyses the reaction sn-glycerol 1-phosphate + all-trans-heptaprenyl diphosphate = 3-heptaprenyl-sn-glycero-1-phosphate + diphosphate. The protein operates within membrane lipid metabolism; glycerophospholipid metabolism. Functionally, prenyltransferase that catalyzes in vivo the transfer of the heptaprenyl moiety of heptaprenyl pyrophosphate (HepPP; 35 carbon atoms) to the C3 hydroxyl of sn-glycerol-1-phosphate (G1P), producing heptaprenylglyceryl phosphate (HepGP). This reaction is an ether-bond-formation step in the biosynthesis of archaea-type G1P-based membrane lipids found in Bacillales. This is Heptaprenylglyceryl phosphate synthase from Staphylococcus carnosus (strain TM300).